A 222-amino-acid polypeptide reads, in one-letter code: Uracil-DNA glycosylase (222 aa).

Aspartate 61 functions as the Proton acceptor in the catalytic mechanism.

It belongs to the uracil-DNA glycosylase (UDG) superfamily. UNG family.

The protein localises to the cytoplasm. The enzyme catalyses Hydrolyzes single-stranded DNA or mismatched double-stranded DNA and polynucleotides, releasing free uracil.. Excises uracil residues from the DNA which can arise as a result of misincorporation of dUMP residues by DNA polymerase or due to deamination of cytosine. The sequence is that of Uracil-DNA glycosylase from Aeromonas hydrophila subsp. hydrophila (strain ATCC 7966 / DSM 30187 / BCRC 13018 / CCUG 14551 / JCM 1027 / KCTC 2358 / NCIMB 9240 / NCTC 8049).